The primary structure comprises 292 residues: Probable 2-(5''-triphosphoribosyl)-3'-dephosphocoenzyme-A synthase (292 aa).

This sequence belongs to the CitG/MdcB family.

The enzyme catalyses 3'-dephospho-CoA + ATP = 2'-(5''-triphospho-alpha-D-ribosyl)-3'-dephospho-CoA + adenine. The protein is Probable 2-(5''-triphosphoribosyl)-3'-dephosphocoenzyme-A synthase of Shigella boydii serotype 18 (strain CDC 3083-94 / BS512).